Consider the following 167-residue polypeptide: Pathogenesis-related protein PRMS (167 aa).

An N-terminal signal peptide occupies residues 1 to 27 (MEASNKLAVLLLWLVMAAATAVHPSYS). The 119-residue stretch at 37 to 155 (PQNSARAAVG…NRGVFIICNY (119 aa)) folds into the SCP domain. Cystine bridges form between cysteine 71-cysteine 143, cysteine 116-cysteine 122, and cysteine 138-cysteine 153.

This sequence belongs to the CRISP family.

Probably involved in the defense reaction of plants against pathogens. The chain is Pathogenesis-related protein PRMS (PRMS) from Zea mays (Maize).